An 873-amino-acid chain; its full sequence is MHEQYQPLEIETQAQNYWKEHQSFLVRELPDKEKFYCLSMFPYPSGKLHMGHVRNYTIGDVISRYHRMQGRNVLQPMGWDAFGMPAENAAMKNNVAPAAWTYDNIAYMKSQLDSLGLAIDWTREVTTCKPDYYRWEQWLFTRLFEKGVIYRKNGTVNWDPVDQTVLANEQVIDGRGWRSGALIEKREIPMYYFKITAYAEELLESLDNLPGWPEQVKTMQRNWIGKSRGMEIAFPYDQASIGHAGQLKVFTTRPDTLMGATYVAVAAEHPLATQAAQNDPQLQAFIDECKRGGVAEADIATQEKKGLATSLFVEHPLTGDKLPVWVANYVLMNYGEGAVMAVPGHDERDFEFANKYGLPIRQVIARVEGENDFEPTVWKEWYGAKDESVRTVNSGKYDDLGYQAAFDAIGADLEAKGLGQARTQFRLRDWGISRQRYWGCPIPIIHCDACGDVPVPAEQLPVVLPEDVVPDGAGSPLAKMPEFYECSCPKCGQPAKRETDTMDTFVESSWYFARYACPQFEGGMLDKKAADYWLPVDQYIGGIEHAILHLLYARFFHKLMRDEGLVGSDEPFRNLLTQGMVVADTYYRTTANGGKDWFNPADVEVERDAKAKVVGARLKSDGQPVEIGGTEKMSKSKNNGVDPQSMIDQYGADTCRLFMMFASPPDMSLEWSDAGVEGANRFLRRVWRLAHAHVSAGLPGALDGASLSDAQKQVRRAIHLAIRQASQDVGQHHKFNTAIAAVMTLMNVLEKAPSQDAQDRALLQEGLETVVLLLAPITPHICHVLWEQLGHAEAVIDARWPVVDESALVQDTLQLVVQVNGKLRGHIDVAASASREDVEAAARANENVLRFTEGLSIRKVIVVPGKLVNIVAN.

The short motif at Pro-42–His-52 is the 'HIGH' region element. Residues Pro-624–Pro-643 are disordered. The 'KMSKS' region signature appears at Lys-632–Ser-636. Lys-635 is an ATP binding site.

The protein belongs to the class-I aminoacyl-tRNA synthetase family.

The protein resides in the cytoplasm. It carries out the reaction tRNA(Leu) + L-leucine + ATP = L-leucyl-tRNA(Leu) + AMP + diphosphate. This is Leucine--tRNA ligase from Pseudomonas paraeruginosa (strain DSM 24068 / PA7) (Pseudomonas aeruginosa (strain PA7)).